Reading from the N-terminus, the 230-residue chain is Cytidylate kinase (230 aa).

Glycine 12–threonine 20 provides a ligand contact to ATP.

This sequence belongs to the cytidylate kinase family. Type 1 subfamily.

Its subcellular location is the cytoplasm. It catalyses the reaction CMP + ATP = CDP + ADP. The catalysed reaction is dCMP + ATP = dCDP + ADP. In Yersinia enterocolitica serotype O:8 / biotype 1B (strain NCTC 13174 / 8081), this protein is Cytidylate kinase.